The sequence spans 56 residues: Ferredoxin (56 aa).

2 4Fe-4S ferredoxin-type domains span residues 2-28 (AYKILDTCVSCGACAAECPVDAISQGD) and 29-56 (TQFVIDADTCIDCGNCANVCPVGAPVQE). Cys9, Cys12, Cys15, Cys19, Cys38, Cys41, Cys44, and Cys48 together coordinate [4Fe-4S] cluster.

Requires [4Fe-4S] cluster as cofactor.

In terms of biological role, ferredoxins are iron-sulfur proteins that transfer electrons in a wide variety of metabolic reactions. The sequence is that of Ferredoxin (fer) from Clostridium perfringens (strain 13 / Type A).